A 344-amino-acid chain; its full sequence is MLTIYSDDHRLHHGRHELIGGQFTPCFEKPSRADMVLDRVKAVGLGEVRAPRDFGLEPIRRVHSEGFVRFLQNAWQDWLATGRSHDMLPIAWPTRRLRQTEPDNIDGRLGYYSFDAGAPITAGTWQAITSSANVALSGQSELANGARSVFSLCRPPGHHAAADYMGGYCFFNNAAIAAQAFLDRGAGRVAILDVDYHHGNGTQDIFYDRADVLFTSIHGDPRFEYPYFLGYADEKGNGVGTGYNFNYPLAAGSDWATWSQALQAAIRQIQAYAADALIVSLGVDTFKEDPISQFRLDSPDYLRMGEAIGKLGLATLFVMEGGYAVEEIGINAVNVLQGFEGVHR.

His159 acts as the Proton donor/acceptor in catalysis. Zn(2+) is bound by residues Asp195, His197, and Asp284.

It belongs to the histone deacetylase family. As to quaternary structure, homodimer. The cofactor is Zn(2+).

It carries out the reaction N-acetylputrescine + H2O = putrescine + acetate. It catalyses the reaction N-acetylcadaverine + H2O = cadaverine + acetate. Its pathway is amine and polyamine metabolism. Functionally, catalyzes the deacetylation of acetylated polyamines such as N-acetylputrescine and N-acetylcadaverine. Plays an important role in the metabolism of acetylated polyamines in P.aeruginosa. Is involved in the degradation pathways of N-acetylputrescine and N-acetylcadaverine, that allow P.aeruginosa to utilize these acetylpolyamines as a carbon source under glucose starvation. Shows nearly no activity against N(1)-acetylspermine and N(1)-acetylspermidine. Can also hydrolyze artificial trifluoroacetylated lysine-derivative, and to a lesser extent, acetylated lysine-derivative. The protein is Acetylpolyamine amidohydrolase 2 of Pseudomonas aeruginosa (strain ATCC 15692 / DSM 22644 / CIP 104116 / JCM 14847 / LMG 12228 / 1C / PRS 101 / PAO1).